The sequence spans 125 residues: 14 kDa phosphohistidine phosphatase (125 aa).

Residue Ala2 is modified to N-acetylalanine. Lys21 is a substrate binding site. His53 acts as the Proton acceptor in catalysis. A substrate-binding site is contributed by 94–96 (SMA).

The protein belongs to the janus family. In terms of assembly, monomer. Expressed abundantly in heart and skeletal muscle.

The protein localises to the cytoplasm. It carries out the reaction N(pros)-phospho-L-histidyl-[protein] + H2O = L-histidyl-[protein] + phosphate. The enzyme catalyses N(tele)-phospho-L-histidyl-[protein] + H2O = L-histidyl-[protein] + phosphate. Functionally, exhibits phosphohistidine phosphatase activity. This is 14 kDa phosphohistidine phosphatase (PHPT1) from Homo sapiens (Human).